Reading from the N-terminus, the 317-residue chain is L-lactate dehydrogenase 1 (317 aa).

Residues V17, D38, K43, Y69, and 83–84 contribute to the NAD(+) site; that span reads GA. Residues Q86 and R92 each coordinate substrate. Residues S105, 122–124, and S147 contribute to the NAD(+) site; that span reads ATN. 124–127 serves as a coordination point for substrate; that stretch reads NPVD. A substrate-binding site is contributed by 152 to 155; sequence DSAR. H179 functions as the Proton acceptor in the catalytic mechanism. Y223 carries the post-translational modification Phosphotyrosine. T232 is a substrate binding site.

The protein belongs to the LDH/MDH superfamily. LDH family. Homotetramer.

Its subcellular location is the cytoplasm. It catalyses the reaction (S)-lactate + NAD(+) = pyruvate + NADH + H(+). It functions in the pathway fermentation; pyruvate fermentation to lactate; (S)-lactate from pyruvate: step 1/1. Functionally, catalyzes the conversion of lactate to pyruvate (Potential). Appears to be the primary factor that allows S.aureus growth during nitrosative stress in both aerobically and anaerobically cultured cells. The sequence is that of L-lactate dehydrogenase 1 from Staphylococcus aureus (strain MRSA252).